The primary structure comprises 299 residues: Lathosterol oxidase (299 aa).

3 helical membrane-spanning segments follow: residues 32-52 (ISLL…CATL), 79-99 (FTVK…LLEL), and 117-137 (IHLM…IYWI). Residues 124–252 (VSFLFFTDML…YFTLWDRIGG (129 aa)) enclose the Fatty acid hydroxylase domain. The Histidine box-1 signature appears at 138-143 (HRGLHH). The Histidine box-2 signature appears at 151-155 (HKPHH). A helical membrane pass occupies residues 186 to 206 (VFPLHKVVYLGLYVLVNVWTI). Residues 228-233 (HHTDHH) carry the Histidine box-3 motif. The residue at position 253 (serine 253) is a Phosphoserine. The segment at 280–299 (FAENGCKGKKVGNGEFTKNK) is disordered.

This sequence belongs to the sterol desaturase family. Requires Fe cation as cofactor.

The protein resides in the endoplasmic reticulum membrane. The catalysed reaction is a Delta(7)-sterol + 2 Fe(II)-[cytochrome b5] + O2 + 2 H(+) = a Delta(5),Delta(7)-sterol + 2 Fe(III)-[cytochrome b5] + 2 H2O. The enzyme catalyses lathosterol + 2 Fe(II)-[cytochrome b5] + O2 + 2 H(+) = 7-dehydrocholesterol + 2 Fe(III)-[cytochrome b5] + 2 H2O. It catalyses the reaction 5alpha-cholesta-7,24-dien-3beta-ol + 2 Fe(II)-[cytochrome b5] + O2 + 2 H(+) = 7-dehydrodesmosterol + 2 Fe(III)-[cytochrome b5] + 2 H2O. It participates in steroid biosynthesis; cholesterol biosynthesis. Functionally, catalyzes the penultimate step of the biosynthesis of cholesterol, the dehydrogenation of lathosterol into 7-dehydrocholesterol (7-DHC). Cholesterol is the major sterol component in mammalian membranes and a precursor for bile acid and steroid hormone synthesis. In addition to its essential role in cholesterol biosynthesis, it also indirectly regulates ferroptosis through the production of 7-DHC. By diverting the spread of damage caused by peroxyl radicals from the phospholipid components to its sterol nucleus, 7-DHC prevents this form of cell death. The polypeptide is Lathosterol oxidase (Mus musculus (Mouse)).